The primary structure comprises 588 residues: L-fucose isomerase (588 aa).

Active-site proton acceptor residues include glutamate 335 and aspartate 359. Residues glutamate 335, aspartate 359, and histidine 525 each contribute to the Mn(2+) site.

This sequence belongs to the L-fucose isomerase family. Mn(2+) is required as a cofactor.

The protein resides in the cytoplasm. It catalyses the reaction L-fucose = L-fuculose. It functions in the pathway carbohydrate degradation; L-fucose degradation; L-lactaldehyde and glycerone phosphate from L-fucose: step 1/3. Functionally, converts the aldose L-fucose into the corresponding ketose L-fuculose. The chain is L-fucose isomerase from Streptococcus pneumoniae (strain Hungary19A-6).